A 154-amino-acid polypeptide reads, in one-letter code: MKAIFIILAILMVTQAFKMTSKVNTKLQSQIQSKFQSKNKLASTFQTSSQLKDSCLNDPEQRFYITGCSNNPVCGDAFDCSATGDDEEKCDAVGQNVIDLFYYFWGTCVNDYASCIMFAATTYNMYSGPENCGCINQVSYADWLDYFDCPSFSG.

An N-terminal signal peptide occupies residues 1–16; it reads MKAIFIILAILMVTQA. The propeptide occupies 17-52; the sequence is FKMTSKVNTKLQSQIQSKFQSKNKLASTFQTSSQLK.

The protein localises to the secreted. Its function is as follows. Mating ciliate pheromones (or gamones) are diffusible extracellular communication signals that distinguish different intraspecific classes of cells commonly referred to as 'mating types'. They prepare the latter for conjugation by changing their cell surface properties. The protein is Mating pheromone 2 of Euplotoides octocarinatus (Freshwater ciliate).